The primary structure comprises 768 residues: Polyadenylate-binding protein, cytoplasmic and nuclear (768 aa).

Over residues 1 to 11 (MSAETATNPPV) the composition is skewed to polar residues. The tract at residues 1 to 52 (MSAETATNPPVDTTPGAAPESATNGSNANVAADTTAGEASQTTSSTTPTAQP) is disordered. Over residues 39–52 (ASQTTSSTTPTAQP) the composition is skewed to low complexity. RRM domains lie at 55–133 (ASLY…WSQR), 143–220 (GNVF…HHIA), 236–314 (TNVY…RAQK), and 340–470 (VNLY…LAQR). 3 disordered regions span residues 374-428 (DFAP…EKKP), 633-662 (QQGM…NASP), and 739-768 (KNKG…ETKS). Over residues 637-646 (GRPGQAGRGQ) the composition is skewed to gly residues. In terms of domain architecture, PABC spans 662–739 (PNGLTLQVLN…ALTVYDEYVK (78 aa)). Residues 753 to 768 (NKSKDASQETAEETKS) show a composition bias toward basic and acidic residues.

It belongs to the polyadenylate-binding protein type-1 family.

It is found in the cytoplasm. Its subcellular location is the nucleus. Binds the poly(A) tail of mRNA. Appears to be an important mediator of the multiple roles of the poly(A) tail in mRNA biogenesis, stability and translation. In the nucleus, involved in both mRNA cleavage and polyadenylation. Is also required for efficient mRNA export to the cytoplasm. Acts in concert with a poly(A)-specific nuclease (PAN) to affect poly(A) tail shortening, which may occur concomitantly with either nucleocytoplasmic mRNA transport or translational initiation. In the cytoplasm, stimulates translation initiation and regulates mRNA decay through translation termination-coupled poly(A) shortening, probably mediated by PAN. The polypeptide is Polyadenylate-binding protein, cytoplasmic and nuclear (PAB1) (Coccidioides immitis (strain RS) (Valley fever fungus)).